We begin with the raw amino-acid sequence, 149 residues long: Transcriptional repressor NrdR (149 aa).

A zinc finger spans residues cysteine 3–cysteine 34. One can recognise an ATP-cone domain in the interval proline 49–glutamate 139.

Belongs to the NrdR family. Zn(2+) is required as a cofactor.

Its function is as follows. Negatively regulates transcription of bacterial ribonucleotide reductase nrd genes and operons by binding to NrdR-boxes. This chain is Transcriptional repressor NrdR, found in Klebsiella pneumoniae (strain 342).